A 443-amino-acid chain; its full sequence is Spermidine hydroxycinnamoyltransferase 1 (443 aa).

Catalysis depends on proton acceptor residues His167 and Asp390.

It belongs to the plant acyltransferase family.

Hydroxycinnamoyl transferase that catalyzes the transfer of an acyl from p-coumaryol-CoA to spermidine, to produce coumaroyl spermidine. Can use feruloyl-CoA as acyl donor. Contributes to the natural variation of spermidine-based phenolamides in rice cultivars. The sequence is that of Spermidine hydroxycinnamoyltransferase 1 from Oryza sativa subsp. japonica (Rice).